A 385-amino-acid polypeptide reads, in one-letter code: Chaperone protein DnaJ (385 aa).

Positions 5–70 (DYYEVLGVAK…QKRAAYDRFG (66 aa)) constitute a J domain. Residues 141-219 (GKTETIRIPT…CSGAGRVNRE (79 aa)) form a CR-type zinc finger. Cysteine 154, cysteine 157, cysteine 171, cysteine 174, cysteine 193, cysteine 196, cysteine 207, and cysteine 210 together coordinate Zn(2+). CXXCXGXG motif repeat units follow at residues 154-161 (CETCSGTG), 171-178 (CSTCGGYG), 193-200 (CPNCHGRG), and 207-214 (CTACSGAG).

It belongs to the DnaJ family. Homodimer. The cofactor is Zn(2+).

The protein localises to the cytoplasm. Participates actively in the response to hyperosmotic and heat shock by preventing the aggregation of stress-denatured proteins and by disaggregating proteins, also in an autonomous, DnaK-independent fashion. Unfolded proteins bind initially to DnaJ; upon interaction with the DnaJ-bound protein, DnaK hydrolyzes its bound ATP, resulting in the formation of a stable complex. GrpE releases ADP from DnaK; ATP binding to DnaK triggers the release of the substrate protein, thus completing the reaction cycle. Several rounds of ATP-dependent interactions between DnaJ, DnaK and GrpE are required for fully efficient folding. Also involved, together with DnaK and GrpE, in the DNA replication of plasmids through activation of initiation proteins. This Methylorubrum extorquens (strain PA1) (Methylobacterium extorquens) protein is Chaperone protein DnaJ.